Consider the following 368-residue polypeptide: Alanine racemase (368 aa).

The active-site Proton acceptor; specific for D-alanine is the Lys-40. Lys-40 is subject to N6-(pyridoxal phosphate)lysine. Arg-134 provides a ligand contact to substrate. Tyr-263 serves as the catalytic Proton acceptor; specific for L-alanine. Met-310 provides a ligand contact to substrate.

It belongs to the alanine racemase family. Pyridoxal 5'-phosphate serves as cofactor.

The catalysed reaction is L-alanine = D-alanine. It functions in the pathway amino-acid biosynthesis; D-alanine biosynthesis; D-alanine from L-alanine: step 1/1. Catalyzes the interconversion of L-alanine and D-alanine. May also act on other amino acids. The polypeptide is Alanine racemase (alr) (Listeria innocua serovar 6a (strain ATCC BAA-680 / CLIP 11262)).